The primary structure comprises 163 residues: 2-C-methyl-D-erythritol 2,4-cyclodiphosphate synthase (163 aa).

Residues D12 and H14 each coordinate a divalent metal cation. 4-CDP-2-C-methyl-D-erythritol 2-phosphate is bound by residues 12 to 14 (DVH) and 38 to 39 (HS). H46 lines the a divalent metal cation pocket. Residues 60-62 (DIG), 136-139 (TTSE), F143, and R146 contribute to the 4-CDP-2-C-methyl-D-erythritol 2-phosphate site.

The protein belongs to the IspF family. In terms of assembly, homotrimer. It depends on a divalent metal cation as a cofactor.

It catalyses the reaction 4-CDP-2-C-methyl-D-erythritol 2-phosphate = 2-C-methyl-D-erythritol 2,4-cyclic diphosphate + CMP. It functions in the pathway isoprenoid biosynthesis; isopentenyl diphosphate biosynthesis via DXP pathway; isopentenyl diphosphate from 1-deoxy-D-xylulose 5-phosphate: step 4/6. In terms of biological role, involved in the biosynthesis of isopentenyl diphosphate (IPP) and dimethylallyl diphosphate (DMAPP), two major building blocks of isoprenoid compounds. Catalyzes the conversion of 4-diphosphocytidyl-2-C-methyl-D-erythritol 2-phosphate (CDP-ME2P) to 2-C-methyl-D-erythritol 2,4-cyclodiphosphate (ME-CPP) with a corresponding release of cytidine 5-monophosphate (CMP). The polypeptide is 2-C-methyl-D-erythritol 2,4-cyclodiphosphate synthase (Xanthomonas oryzae pv. oryzae (strain MAFF 311018)).